We begin with the raw amino-acid sequence, 458 residues long: MKRDFNEFKEFIKGKNVAVVGIGVSNIPLIKFLVKLGAKVTAFDMKSAEELGEISKEFEILGVNLELGKGYLDRLTGFEVVFKTPSMRIDSEALLRCKKQGAYITSEMEEFVRYCKGRVYGVTGSDGKTTTTTIVSKLLSQEGYKTWTGGNIGTPLFSNIEEIKEEDKVVLELSSFQLMTMDVEIDVAIVTNITPNHLDMHKDMQEYIDAKKNVFKYQRENDLLVINDENEITKNLDKEAKGKVVRFSSKKTEGEDAYYKDGKLYVHGKEVCKKDNIIIKGMHNVENYLAAFLAVYDEVSIESMKKVAETFGGVHHRCEFIREVDGVKYYNDSIASTPTRTLAGLKAFEKPVILLAGGYDKHVPFEPLAYEGYEKIKAIVLFGVTKEKIKAAFKRLEEEKGIHVPVYSGESLEEVVNIAKSIAESGDIITLSPACASFDMFKNFEVRGDKFKEIVNNI.

Position 124–130 (124–130 (GSDGKTT)) interacts with ATP.

The protein belongs to the MurCDEF family.

The protein resides in the cytoplasm. It catalyses the reaction UDP-N-acetyl-alpha-D-muramoyl-L-alanine + D-glutamate + ATP = UDP-N-acetyl-alpha-D-muramoyl-L-alanyl-D-glutamate + ADP + phosphate + H(+). It participates in cell wall biogenesis; peptidoglycan biosynthesis. Its function is as follows. Cell wall formation. Catalyzes the addition of glutamate to the nucleotide precursor UDP-N-acetylmuramoyl-L-alanine (UMA). The polypeptide is UDP-N-acetylmuramoylalanine--D-glutamate ligase (Clostridium perfringens (strain 13 / Type A)).